A 328-amino-acid polypeptide reads, in one-letter code: Basic leucine zipper (bZIP) transcription factor atfB (328 aa).

A disordered region spans residues 1 to 39; that stretch reads MLPEQSAFGRSAMPGSDAVNPGPSPFAPPPNSFSGDFLG. Over residues 22 to 31 the composition is skewed to pro residues; the sequence is GPSPFAPPPN. The interval 163–202 is basic motif; that stretch reads KAKREKFLERNRLAASKCRQKKKEHTQLLESRYREQSDKK. Residues 163–226 enclose the bZIP domain; that stretch reads KAKREKFLER…LGLKNEVLKH (64 aa). The interval 205–219 is leucine-zipper; that stretch reads LVSEIARLRSEILGL. The tract at residues 250 to 313 is disordered; it reads TTAPDLTDVP…SEASVLTENS (64 aa). Polar residues predominate over residues 262–277; sequence ASSSEGPMTPRPQQAL. The segment covering 283-305 has biased composition (basic and acidic residues); the sequence is DPLHLEPSRADGSTDHSVRRDSE.

This sequence belongs to the bZIP family. ATF subfamily.

The protein localises to the nucleus. Its function is as follows. Transcription factor that acts as a key player in the regulatory circuit that integrates secondary metabolism and cellular response to oxidative stress. Regulates the genes involved in development, as well as osmotic, oxidative, and cell wall stresses. Participates in the caspofungin paradoxical effect (CPE), where fungi grow beyond the minimum inhibitory concentration of caspofungin. Plays a role in virulence. This is Basic leucine zipper (bZIP) transcription factor atfB from Aspergillus fumigatus (strain ATCC MYA-4609 / CBS 101355 / FGSC A1100 / Af293) (Neosartorya fumigata).